Here is an 886-residue protein sequence, read N- to C-terminus: Alanine--tRNA ligase (886 aa).

The Zn(2+) site is built by histidine 564, histidine 568, cysteine 666, and histidine 670.

It belongs to the class-II aminoacyl-tRNA synthetase family. The cofactor is Zn(2+).

The protein localises to the cytoplasm. It carries out the reaction tRNA(Ala) + L-alanine + ATP = L-alanyl-tRNA(Ala) + AMP + diphosphate. Functionally, catalyzes the attachment of alanine to tRNA(Ala) in a two-step reaction: alanine is first activated by ATP to form Ala-AMP and then transferred to the acceptor end of tRNA(Ala). Also edits incorrectly charged Ser-tRNA(Ala) and Gly-tRNA(Ala) via its editing domain. This chain is Alanine--tRNA ligase, found in Prochlorococcus marinus (strain MIT 9515).